The sequence spans 369 residues: Histidinol-phosphate aminotransferase 2 (369 aa).

Lys231 is subject to N6-(pyridoxal phosphate)lysine.

Belongs to the class-II pyridoxal-phosphate-dependent aminotransferase family. Histidinol-phosphate aminotransferase subfamily. Homodimer. Pyridoxal 5'-phosphate is required as a cofactor.

It catalyses the reaction L-histidinol phosphate + 2-oxoglutarate = 3-(imidazol-4-yl)-2-oxopropyl phosphate + L-glutamate. It functions in the pathway amino-acid biosynthesis; L-histidine biosynthesis; L-histidine from 5-phospho-alpha-D-ribose 1-diphosphate: step 7/9. The protein is Histidinol-phosphate aminotransferase 2 of Legionella pneumophila subsp. pneumophila (strain Philadelphia 1 / ATCC 33152 / DSM 7513).